The primary structure comprises 863 residues: Cilia- and flagella-associated protein 58 (863 aa).

Coiled-coil stretches lie at residues 107–600 and 631–815; these read TVKE…NERD and QSQY…KQVF. The tract at residues 836–863 is disordered; the sequence is GPSLLDQLPGGSGTGSGGMATGGGVGMS. Residues 845–863 are compositionally biased toward gly residues; the sequence is GGSGTGSGGMATGGGVGMS.

The protein belongs to the CFAP58 family.

The protein localises to the cell projection. The protein resides in the cilium. Its subcellular location is the flagellum. The chain is Cilia- and flagella-associated protein 58 from Chlamydomonas reinhardtii (Chlamydomonas smithii).